Here is a 256-residue protein sequence, read N- to C-terminus: Acetyl-coenzyme A carboxylase carboxyl transferase subunit alpha (256 aa).

The CoA carboxyltransferase C-terminal domain maps to 1–236 (MSDVARILKE…KTAIVDELAE (236 aa)).

The protein belongs to the AccA family. As to quaternary structure, acetyl-CoA carboxylase is a heterohexamer composed of biotin carboxyl carrier protein (AccB), biotin carboxylase (AccC) and two subunits each of ACCase subunit alpha (AccA) and ACCase subunit beta (AccD).

The protein resides in the cytoplasm. The catalysed reaction is N(6)-carboxybiotinyl-L-lysyl-[protein] + acetyl-CoA = N(6)-biotinyl-L-lysyl-[protein] + malonyl-CoA. It participates in lipid metabolism; malonyl-CoA biosynthesis; malonyl-CoA from acetyl-CoA: step 1/1. Functionally, component of the acetyl coenzyme A carboxylase (ACC) complex. First, biotin carboxylase catalyzes the carboxylation of biotin on its carrier protein (BCCP) and then the CO(2) group is transferred by the carboxyltransferase to acetyl-CoA to form malonyl-CoA. The sequence is that of Acetyl-coenzyme A carboxylase carboxyl transferase subunit alpha from Streptococcus thermophilus (strain CNRZ 1066).